A 705-amino-acid polypeptide reads, in one-letter code: Lethal(3)malignant brain tumor-like protein 2 (705 aa).

The disordered stretch occupies residues 1-84 (MEKPRSIEET…GTPRSLDGSG (84 aa)). Position 13 is a phosphoserine (S13). The segment covering 15-25 (PMEEEEDDDLE) has biased composition (acidic residues). Over residues 38 to 49 (SSVGSESSSYLE) the composition is skewed to low complexity. The segment covering 50–60 (ESSEAENEDRE) has biased composition (acidic residues). Phosphoserine is present on S67. A Phosphothreonine modification is found at T76. Residues 81 to 116 (DGSGSEPAVCEMCGIVGTREAFFSKTKRFCSVSCSR) form an FCS-type zinc finger. Zn(2+) contacts are provided by C90, C93, C110, and C114. MBT repeat units lie at residues 179 to 283 (FDWG…LVPP), 291 to 391 (TDWK…IKMS), 397 to 500 (MAHH…LTPP), and 508 to 604 (FNWE…LQPP). A Phosphoserine modification is found at S338. K405 is covalently cross-linked (Glycyl lysine isopeptide (Lys-Gly) (interchain with G-Cter in SUMO2)). Residues 608 to 665 (EPATPLKAKEATKKKKKQFGKKRKRIPPTKTRPLRQGSKKPLLEDDPQGARKISSEPV) form a disordered region. The segment covering 619–634 (TKKKKKQFGKKRKRIP) has biased composition (basic residues). Residues K647, K659, and K675 each participate in a glycyl lysine isopeptide (Lys-Gly) (interchain with G-Cter in SUMO2) cross-link. Residues 680–705 (DVASPDKASSPELPVSVENIKQETDD) are disordered. Phosphoserine occurs at positions 683, 688, and 689. A Glycyl lysine isopeptide (Lys-Gly) (interchain with G-Cter in SUMO1); alternate cross-link involves residue K700. A Glycyl lysine isopeptide (Lys-Gly) (interchain with G-Cter in SUMO2); alternate cross-link involves residue K700.

Part of the E2F6.com-1 complex in G0 phase composed of E2F6, MGA, MAX, TFDP1, CBX3, BAT8, EUHMTASE1, RING1, RNF2, MBLR, BAT8 and YAF2.

The protein resides in the nucleus. Its function is as follows. Putative Polycomb group (PcG) protein. PcG proteins maintain the transcriptionally repressive state of genes, probably via a modification of chromatin, rendering it heritably changed in its expressibility. Its association with a chromatin-remodeling complex suggests that it may contribute to prevent expression of genes that trigger the cell into mitosis. Binds to monomethylated and dimethylated 'Lys-20' on histone H4. Binds histone H3 peptides that are monomethylated or dimethylated on 'Lys-4', 'Lys-9' or 'Lys-27'. The sequence is that of Lethal(3)malignant brain tumor-like protein 2 (L3MBTL2) from Homo sapiens (Human).